Reading from the N-terminus, the 457-residue chain is uncharacterized protein (457 aa).

An N6-(pyridoxal phosphate)lysine modification is found at Lys75.

Pyridoxal 5'-phosphate serves as cofactor.

This is an uncharacterized protein from Sinorhizobium fredii (strain NBRC 101917 / NGR234).